The chain runs to 1170 residues: Protein SCAR4 (1170 aa).

Disordered stretches follow at residues 180-207 (KLGKDKRLRQSKKKGSHTTIKETPEDSR), 356-376 (NDADSPASTESEVKEAGSDDK), 631-674 (AAPK…PRDL), 701-742 (SYSG…NQTG), 783-819 (NQRQESPSETGSANSRTSSDESPPTQNGSVGVQSSPL), 960-980 (EESKATEEQSPSGVNGTSDTY), and 1026-1046 (HNNPHPAKLEEEEPQVDHPLE). Over residues 183–195 (KDKRLRQSKKKGS) the composition is skewed to basic residues. A compositionally biased stretch (basic and acidic residues) spans 198–207 (TIKETPEDSR). A compositionally biased stretch (polar residues) spans 356–365 (NDADSPASTE). A compositionally biased stretch (basic and acidic residues) spans 366–376 (SEVKEAGSDDK). Composition is skewed to polar residues over residues 640–668 (SQDGSSMNPAQSKHISTSEISSENGTLMS), 701–716 (SYSGQEDPQTMSIVSD), 783–818 (NQRQESPSETGSANSRTSSDESPPTQNGSVGVQSSP), and 967–980 (EQSPSGVNGTSDTY). Residues 1105–1123 (ENDSLLEIIRSKSFNLRPA) form the WH2 domain.

This sequence belongs to the SCAR/WAVE family. Interacts with SPK1. As to expression, expressed in expanding cotyledons, expanding leaves and expanding siliques containing developing embryos. Detected in unopened flower buds and in the expanding tip region of roots. Reduced expression in mature leaves.

It is found in the cytoplasm. The protein resides in the cytoskeleton. Involved in regulation of actin and microtubule organization. Part of a WAVE complex that activates the Arp2/3 complex. Regulates trichome branch positioning and expansion. The protein is Protein SCAR4 (SCAR4) of Arabidopsis thaliana (Mouse-ear cress).